Here is a 537-residue protein sequence, read N- to C-terminus: Efflux pump ustT (537 aa).

Over residues 1–25 the composition is skewed to basic and acidic residues; the sequence is MAKEAQSLHELDNMKEKEVDQEKKA. Positions 1-50 are disordered; that stretch reads MAKEAQSLHELDNMKEKEVDQEKKAPTSVGDQEEHDDPKKQASHSQNVSE. N-linked (GlcNAc...) asparagine glycosylation is present at N47. 8 consecutive transmembrane segments (helical) span residues 71-91, 104-124, 137-157, 162-182, 193-213, 236-256, 266-286, and 304-324; these read PLAMAVIMVAISMGMFLVSLL, WVYMSLVFIFVIGSAVGAGAM, GIGLGGVLSGSTILIAENAPL, MFLGILMATMSISAIVGPLIG, WCFILNIPIGGAIIAVLFFFV, LGSALLLPAVVCLILALQWAG, IILLFVFGGLLSIGFVVSQML, and FGSFLFSAMTGGAMLVVTYWI. N333 carries N-linked (GlcNAc...) asparagine glycosylation. The next 4 helical transmembrane spans lie at 339–359, 363–383, 397–417, and 430–450; these read AGIRTIALVLSQAVGAIMGGG, LIGYPPPIMMISATFIAVGAG, WIGYQILMGLGLGFGTQQASL, and TAISLIFFGMQLGGSIFVCIG. The N-linked (GlcNAc...) asparagine glycan is linked to N501. A helical transmembrane segment spans residues 507 to 527; it reads TFYVALAAGITSMLSAFLVQW.

Belongs to the major facilitator superfamily. TCR/Tet family.

The protein localises to the cell membrane. Efflux pump; part of the gene cluster that mediates the biosynthesis of ustilaginoidins, dimeric gamma-naphthopyrones isolated from different fungal species. The sequence is that of Efflux pump ustT from Ustilaginoidea virens (Rice false smut fungus).